Here is a 348-residue protein sequence, read N- to C-terminus: Sulfate/thiosulfate import ATP-binding protein CysA (348 aa).

In terms of domain architecture, ABC transporter spans Ile3–Ile237. Gly35 to Thr42 contributes to the ATP binding site.

The protein belongs to the ABC transporter superfamily. Sulfate/tungstate importer (TC 3.A.1.6) family. In terms of assembly, the complex is composed of two ATP-binding proteins (CysA), two transmembrane proteins (CysT and CysW) and a solute-binding protein (CysP).

The protein localises to the cell inner membrane. The catalysed reaction is sulfate(out) + ATP + H2O = sulfate(in) + ADP + phosphate + H(+). The enzyme catalyses thiosulfate(out) + ATP + H2O = thiosulfate(in) + ADP + phosphate + H(+). Part of the ABC transporter complex CysAWTP involved in sulfate/thiosulfate import. Responsible for energy coupling to the transport system. The sequence is that of Sulfate/thiosulfate import ATP-binding protein CysA from Methylococcus capsulatus (strain ATCC 33009 / NCIMB 11132 / Bath).